The primary structure comprises 360 residues: Phospho-N-acetylmuramoyl-pentapeptide-transferase (360 aa).

10 consecutive transmembrane segments (helical) span residues 26–46 (AILG…KLIE), 74–94 (MGGL…GDLG), 97–117 (YVWV…IDDY), 134–154 (YILQ…TAAN), 168–188 (VMPQ…VGSS), 199–219 (GLAI…AYLS), 236–256 (SGEL…FLWF), 263–283 (VFMG…IAVL), 288–308 (ILLV…ILQV), and 338–358 (VIVR…ATLK).

Belongs to the glycosyltransferase 4 family. MraY subfamily. Mg(2+) is required as a cofactor.

Its subcellular location is the cell inner membrane. The enzyme catalyses UDP-N-acetyl-alpha-D-muramoyl-L-alanyl-gamma-D-glutamyl-meso-2,6-diaminopimeloyl-D-alanyl-D-alanine + di-trans,octa-cis-undecaprenyl phosphate = di-trans,octa-cis-undecaprenyl diphospho-N-acetyl-alpha-D-muramoyl-L-alanyl-D-glutamyl-meso-2,6-diaminopimeloyl-D-alanyl-D-alanine + UMP. Its pathway is cell wall biogenesis; peptidoglycan biosynthesis. Catalyzes the initial step of the lipid cycle reactions in the biosynthesis of the cell wall peptidoglycan: transfers peptidoglycan precursor phospho-MurNAc-pentapeptide from UDP-MurNAc-pentapeptide onto the lipid carrier undecaprenyl phosphate, yielding undecaprenyl-pyrophosphoryl-MurNAc-pentapeptide, known as lipid I. This chain is Phospho-N-acetylmuramoyl-pentapeptide-transferase, found in Shewanella oneidensis (strain ATCC 700550 / JCM 31522 / CIP 106686 / LMG 19005 / NCIMB 14063 / MR-1).